The primary structure comprises 80 residues: Protein Vpu (80 aa).

The Extracellular segment spans residues 1-7 (MLSLQIL). Residues 8 to 28 (AIVALVVAAIIAIVVWSIVFI) form a helical membrane-spanning segment. The Cytoplasmic portion of the chain corresponds to 29-80 (EYRKILRQRKIDRLIDRIREREEDSGNESEGDQEELAALERGHLAPWDVDDL). The disordered stretch occupies residues 49-80 (REEDSGNESEGDQEELAALERGHLAPWDVDDL). Serine 53 and serine 57 each carry phosphoserine; by host CK2. Acidic residues predominate over residues 53–65 (SGNESEGDQEELA).

This sequence belongs to the HIV-1 VPU protein family. In terms of assembly, homopentamer. Interacts with host CD4 and BRTC; these interactions induce proteasomal degradation of CD4. Interacts with host BST2; this interaction leads to the degradation of host BST2. Interacts with host FBXW11. Interacts with host AP1M1; this interaction plays a role in the mistrafficking and subsequent degradation of host BST2. Interacts with host RANBP2; this interaction allows Vpu to down-regulate host BLM sumoylation. Phosphorylated by host CK2. This phosphorylation is necessary for interaction with human BTRC and degradation of CD4.

Its subcellular location is the host membrane. Its activity is regulated as follows. Ion channel activity is inhibited by hexamethylene amiloride in vitro. In terms of biological role, enhances virion budding by targeting host CD4 and Tetherin/BST2 to proteasome degradation. Degradation of CD4 prevents any unwanted premature interactions between viral Env and its host receptor CD4 in the endoplasmic reticulum. Degradation of antiretroviral protein Tetherin/BST2 is important for virion budding, as BST2 tethers new viral particles to the host cell membrane. Mechanistically, Vpu bridges either CD4 or BST2 to BTRC, a substrate recognition subunit of the Skp1/Cullin/F-box protein E3 ubiquitin ligase, induces their ubiquitination and subsequent proteasomal degradation. The alteration of the E3 ligase specificity by Vpu seems to promote the degradation of host IKBKB, leading to NF-kappa-B down-regulation and subsequent apoptosis. Acts as a viroporin that forms an oligomeric ion channel in membranes. Modulates the host DNA repair mechanisms to promote degradation of nuclear viral cDNA in cells that are already productively infected in order to suppress immune sensing and proviral hyper-integration (superinfection). Manipulates PML-NBs and modulates SUMOylation of host BLM protein thereby enhancing its DNA-end processing activity toward viral unintegrated linear DNA. Also inhibits RAD52-mediated homologous repair of viral cDNA, preventing the generation of dead-end circular forms of single copies of the long terminal repeat and permitting sustained nucleolytic attack. This is Protein Vpu from Human immunodeficiency virus type 1 group M subtype B (strain 89.6) (HIV-1).